A 337-amino-acid polypeptide reads, in one-letter code: Monoacylglycerol lipase ABHD6 (337 aa).

The Extracellular portion of the chain corresponds to 1–8; sequence MDLDVVNM. A helical; Signal-anchor for type II membrane protein membrane pass occupies residues 9-29; it reads FVIAGGTLAIPILAFVASFLL. At 30-337 the chain is on the cytoplasmic side; that stretch reads WPSALIRIYY…HNTDNNKKLD (308 aa). The AB hydrolase-1 domain maps to 72 to 313; that stretch reads PSILMLHGFS…CGHSVVMERP (242 aa). Phe-80 serves as a coordination point for (9Z)-octadecenoate. Ser-148 acts as the Nucleophile in catalysis. Position 149 (Met-149) interacts with (9Z)-octadecenoate. Catalysis depends on charge relay system residues Asp-278 and His-306. His-306 contacts (9Z)-octadecenoate.

Belongs to the AB hydrolase superfamily.

The protein resides in the late endosome membrane. Its subcellular location is the lysosome membrane. It localises to the mitochondrion membrane. The enzyme catalyses Hydrolyzes glycerol monoesters of long-chain fatty acids.. It catalyses the reaction 1-octanoylglycerol + H2O = octanoate + glycerol + H(+). The catalysed reaction is 1-decanoylglycerol + H2O = decanoate + glycerol + H(+). It carries out the reaction 1-dodecanoylglycerol + H2O = dodecanoate + glycerol + H(+). The enzyme catalyses 1-tetradecanoylglycerol + H2O = tetradecanoate + glycerol + H(+). It catalyses the reaction 2-hexadecanoylglycerol + H2O = glycerol + hexadecanoate + H(+). The catalysed reaction is 2-(9Z-octadecenoyl)-glycerol + H2O = glycerol + (9Z)-octadecenoate + H(+). It carries out the reaction 1-(9Z-octadecenoyl)-glycerol + H2O = glycerol + (9Z)-octadecenoate + H(+). The enzyme catalyses 2-(9Z,12Z-octadecadienoyl)-glycerol + H2O = (9Z,12Z)-octadecadienoate + glycerol + H(+). It catalyses the reaction 2-(5Z,8Z,11Z,14Z-eicosatetraenoyl)-glycerol + H2O = glycerol + (5Z,8Z,11Z,14Z)-eicosatetraenoate + H(+). The catalysed reaction is 1-(5Z,8Z,11Z,14Z-eicosatetraenoyl)-glycerol + H2O = glycerol + (5Z,8Z,11Z,14Z)-eicosatetraenoate + H(+). It carries out the reaction 1-(9Z,12Z-octadecadienoyl)-glycerol + H2O = (9Z,12Z)-octadecadienoate + glycerol + H(+). The enzyme catalyses 3-(9Z-octadecenoyl)-sn-glycero-1-phospho-(3'-(9Z-octadecenoyl)-1'-sn-glycerol) + H2O = 3-(9Z-octadecenoyl)-sn-glycero-1-phospho-(1'-sn-glycerol) + (9Z)-octadecenoate + H(+). It catalyses the reaction (S,S)-2-(9Z-octadecenoyl)-sn-glycero-1-phospho-(2'-(9Z-octadecenoyl)-1'-sn-glycerol) + H2O = (S,S)-2-(9Z-octadecenoyl)-sn-glycero-1-phospho-(1'-sn-glycerol) + (9Z)-octadecenoate + H(+). The catalysed reaction is (R,R)-2-(9Z-octadecenoyl)-sn-glycero-3-phospho-(2'-(9Z-octadecenoyl)-3'-sn-glycerol) + H2O = (R,R)-2-(9Z-octadecenoyl)-sn-glycero-3-phospho-(3'-sn-glycerol) + (9Z)-octadecenoate + H(+). In terms of biological role, lipase that preferentially hydrolysis medium-chain saturated monoacylglycerols including 2-arachidonoylglycerol. Through 2-arachidonoylglycerol degradation may regulate endocannabinoid signaling pathways. Also has a lysophosphatidyl lipase activity with a preference for lysophosphatidylglycerol among other lysophospholipids. Also able to degrade bis(monoacylglycero)phosphate (BMP) and constitutes the major enzyme for BMP catabolism. BMP, also known as lysobisphosphatidic acid, is enriched in late endosomes and lysosomes and plays a key role in the formation of intraluminal vesicles and in lipid sorting. The protein is Monoacylglycerol lipase ABHD6 of Homo sapiens (Human).